We begin with the raw amino-acid sequence, 236 residues long: Ubiquinone biosynthesis O-methyltransferase (236 aa).

S-adenosyl-L-methionine contacts are provided by Arg39, Gly59, Asp80, and Met124.

Belongs to the methyltransferase superfamily. UbiG/COQ3 family.

It carries out the reaction a 3-demethylubiquinol + S-adenosyl-L-methionine = a ubiquinol + S-adenosyl-L-homocysteine + H(+). The enzyme catalyses a 3-(all-trans-polyprenyl)benzene-1,2-diol + S-adenosyl-L-methionine = a 2-methoxy-6-(all-trans-polyprenyl)phenol + S-adenosyl-L-homocysteine + H(+). Its pathway is cofactor biosynthesis; ubiquinone biosynthesis. In terms of biological role, O-methyltransferase that catalyzes the 2 O-methylation steps in the ubiquinone biosynthetic pathway. This Shewanella sp. (strain W3-18-1) protein is Ubiquinone biosynthesis O-methyltransferase.